Reading from the N-terminus, the 253-residue chain is Ribosomal RNA small subunit methyltransferase I (253 aa).

The segment covering 230–246 (RKEQRSQRSFSKGDKKP) has biased composition (basic and acidic residues). A disordered region spans residues 230–253 (RKEQRSQRSFSKGDKKPSFKRFKK).

This sequence belongs to the methyltransferase superfamily. RsmI family.

It localises to the cytoplasm. It carries out the reaction cytidine(1402) in 16S rRNA + S-adenosyl-L-methionine = 2'-O-methylcytidine(1402) in 16S rRNA + S-adenosyl-L-homocysteine + H(+). Functionally, catalyzes the 2'-O-methylation of the ribose of cytidine 1402 (C1402) in 16S rRNA. This Leptospira borgpetersenii serovar Hardjo-bovis (strain L550) protein is Ribosomal RNA small subunit methyltransferase I.